The sequence spans 140 residues: Large ribosomal subunit protein uL22 (140 aa).

It belongs to the universal ribosomal protein uL22 family. In terms of assembly, part of the 50S ribosomal subunit.

In terms of biological role, this protein binds specifically to 23S rRNA; its binding is stimulated by other ribosomal proteins, e.g. L4, L17, and L20. It is important during the early stages of 50S assembly. It makes multiple contacts with different domains of the 23S rRNA in the assembled 50S subunit and ribosome. Its function is as follows. The globular domain of the protein is located near the polypeptide exit tunnel on the outside of the subunit, while an extended beta-hairpin is found that lines the wall of the exit tunnel in the center of the 70S ribosome. The polypeptide is Large ribosomal subunit protein uL22 (Parafrankia sp. (strain EAN1pec)).